A 255-amino-acid polypeptide reads, in one-letter code: Ribonuclease HII (255 aa).

Residues 72-255 (QYIAGIDEAG…RSFAPVKAHE (184 aa)) form the RNase H type-2 domain. 3 residues coordinate a divalent metal cation: aspartate 78, glutamate 79, and aspartate 170.

Belongs to the RNase HII family. Requires Mn(2+) as cofactor. The cofactor is Mg(2+).

It is found in the cytoplasm. It carries out the reaction Endonucleolytic cleavage to 5'-phosphomonoester.. Endonuclease that specifically degrades the RNA of RNA-DNA hybrids. This chain is Ribonuclease HII, found in Bacillus licheniformis (strain ATCC 14580 / DSM 13 / JCM 2505 / CCUG 7422 / NBRC 12200 / NCIMB 9375 / NCTC 10341 / NRRL NRS-1264 / Gibson 46).